Consider the following 1987-residue polypeptide: Transcription factor 20 (1987 aa).

Positions 1–22 (MQSFREQSSYHGNQQSYPQEVH) are enriched in polar residues. 5 disordered regions span residues 1–79 (MQSF…QGYQ), 96–432 (DTVA…GNVP), 446–481 (LSPT…DPGL), 502–816 (LLSD…GTAR), and 844–891 (PHWG…SLSE). Positions 51–74 (TGSSSSGRRGTAAAAAAMASETSG) are enriched in low complexity. The residue at position 59 (R59) is an Omega-N-methylarginine. Positions 121 to 142 (QGSSFGNQYASEGHVSQFQAQH) are enriched in polar residues. Residues 163 to 205 (SAQYQQQASSQQQQQQQQQQQQQQQQQQQQVQQLRQQLYQSHQ) are compositionally biased toward low complexity. The span at 206–235 (PLPQTTGQPASGSSHLQPMQRPSTLPSSAG) shows a compositional bias: polar residues. Residues 248-277 (QSSASSSSSSSFPSPQRFSQSGQSYDGSYS) are compositionally biased toward low complexity. Over residues 289 to 311 (VGSNAQAYGTQSNYSYQPQSMKN) the composition is skewed to polar residues. K316 is covalently cross-linked (Glycyl lysine isopeptide (Lys-Gly) (interchain with G-Cter in SUMO2)). Residues 322 to 354 (QQGQQQQQQQPQPQQQQPQQQQQQQQQQQHPPQ) are compositionally biased toward low complexity. The span at 357–377 (MQYTNAATKMPLQSQVGQYNQ) shows a compositional bias: polar residues. Positions 396–416 (SNPSPAASVVQSPSCSSTPSP) are enriched in low complexity. Over residues 417-432 (LMQSGENLQCGQGNVP) the composition is skewed to polar residues. Positions 446–456 (LSPTPSMMPSP) are enriched in low complexity. Phosphoserine is present on residues S447 and S458. Composition is skewed to polar residues over residues 526-537 (SCTNSEGSSQPE), 566-576 (LSGQSTSSDTT), and 585-605 (AGSS…TSPA). 4 positions are modified to phosphoserine: S567, S588, S603, and S612. Residues 618-627 (TSLSSEGNTK) show a composition bias toward polar residues. Position 631 is an N6-acetyllysine (K631). Basic and acidic residues predominate over residues 645–657 (RVEKSGGQDKGSQ). A compositionally biased stretch (polar residues) spans 666 to 682 (RPPSNSGVKEISHTSLP). Phosphoserine is present on S669. Residues 693-715 (GNKNGDNNSSNHNGEGNGPSSHS) are compositionally biased toward low complexity. Polar residues predominate over residues 722-731 (TGRTEPSKSP). Residues K739, K762, K777, K852, K861, and K873 each participate in a glycyl lysine isopeptide (Lys-Gly) (interchain with G-Cter in SUMO2) cross-link. Residues 761-777 (EKGDFGSHGERKGRNEK) show a composition bias toward basic and acidic residues. The residue at position 900 (S900) is a Phosphoserine. Glycyl lysine isopeptide (Lys-Gly) (interchain with G-Cter in SUMO2) cross-links involve residues K949 and K951. A disordered region spans residues 949–1065 (KLKSQSGQIK…GDPHHMNPHM (117 aa)). K958 is covalently cross-linked (Glycyl lysine isopeptide (Lys-Gly) (interchain with G-Cter in SUMO1); alternate). K958 is covalently cross-linked (Glycyl lysine isopeptide (Lys-Gly) (interchain with G-Cter in SUMO2); alternate). Positions 974 to 989 (KSGDHCHPTSIKHETY) are enriched in basic and acidic residues. Residue K985 forms a Glycyl lysine isopeptide (Lys-Gly) (interchain with G-Cter in SUMO2) linkage. S994 and S1033 each carry phosphoserine. K1043 is covalently cross-linked (Glycyl lysine isopeptide (Lys-Gly) (interchain with G-Cter in SUMO2)). R1052 is subject to Omega-N-methylarginine. S1081 is subject to Phosphoserine. Glycyl lysine isopeptide (Lys-Gly) (interchain with G-Cter in SUMO2) cross-links involve residues K1114, K1126, K1165, K1201, K1206, K1211, K1238, K1259, K1295, and K1302. The tract at residues 1136–1372 (VIAAAQHRQE…SPAKTKILPP (237 aa)) is disordered. Residues 1158–1170 (DRVRSPLKNDKDG) show a composition bias toward basic and acidic residues. Positions 1198 to 1219 (LPAKSMELKHSSQKLQESCWDL) are leucine-zipper. Positions 1282–1295 (RRRVRSFISPIPSK) match the Nuclear localization signal motif. 2 stretches are compositionally biased toward basic and acidic residues: residues 1305–1321 (NADD…EGAD) and 1332–1346 (HSQD…DSSK). A Phosphoserine modification is found at S1333. Residue K1337 forms a Glycyl lysine isopeptide (Lys-Gly) (interchain with G-Cter in SUMO2) linkage. Residue S1363 is modified to Phosphoserine. K1366 is covalently cross-linked (Glycyl lysine isopeptide (Lys-Gly) (interchain with G-Cter in SUMO2)). S1389 bears the Phosphoserine mark. The interval 1415–1434 (SLKSGPPEGGTVATQEAEME) is disordered. Residues K1417, K1437, K1456, and K1474 each participate in a glycyl lysine isopeptide (Lys-Gly) (interchain with G-Cter in SUMO2) cross-link. The disordered stretch occupies residues 1446-1636 (SVTNQESNVE…KQAVPIVEPQ (191 aa)). Basic and acidic residues predominate over residues 1463 to 1479 (EEWRGSGDDKVKTEAHV). Polar residues predominate over residues 1481-1501 (TASTGKEPSGTMTSTASQKPG). A Glycyl lysine isopeptide (Lys-Gly) (interchain with G-Cter in SUMO2) cross-link involves residue K1538. At S1550 the chain carries Phosphoserine. K1552 is covalently cross-linked (Glycyl lysine isopeptide (Lys-Gly) (interchain with G-Cter in SUMO2)). Residues 1565–1579 (GKKKGRPIGSVNKQK) constitute a DNA-binding region (a.T hook). Residues 1584 to 1594 (QPPPPPQPPQM) are compositionally biased toward pro residues. Residues 1604 to 1628 (KPKKQRQRRERRKPGAQPRKRKTKQ) carry the Nuclear localization signal motif. The segment covering 1606-1627 (KKQRQRRERRKPGAQPRKRKTK) has biased composition (basic residues). K1641 is covalently cross-linked (Glycyl lysine isopeptide (Lys-Gly) (interchain with G-Cter in SUMO2)). 2 disordered regions span residues 1685–1710 (QTKL…SKVL) and 1760–1865 (TLPK…GPEL). S1697 carries the phosphoserine modification. Phosphothreonine occurs at positions 1699, 1790, and 1792. Residues 1812-1819 (RFKRRHRS) carry the Nuclear localization signal motif. Residues 1850-1859 (DTKPSVPTTS) are compositionally biased toward polar residues. The segment at 1856–1892 (PTTSEGGPELELQIPELPLDSNEFWVHEGCILWANGI) adopts a C2HC pre-PHD-type; degenerate zinc-finger fold. A PHD-type zinc finger spans residues 1912–1960 (MKCSHCQEAGATLGCYNKGCSFRYHYPCAIDADCLLHEENFSVRCPKHK). The tract at residues 1966 to 1987 (PLPPLQNKTAKGSLSTEQSERG) is disordered. Residues 1971–1987 (QNKTAKGSLSTEQSERG) are compositionally biased toward polar residues.

As to quaternary structure, homodimer. Interacts with RNF4 and JUN. Binds to the regulatory region of MMP3. Expressed in brain, lung, liver, kidney and testes.

The protein resides in the nucleus. Its function is as follows. Transcriptional activator that binds to the regulatory region of MMP3 and thereby controls stromelysin expression. It stimulates the activity of various transcriptional activators such as JUN, SP1, PAX6 and ETS1, suggesting a function as a coactivator. The polypeptide is Transcription factor 20 (Tcf20) (Mus musculus (Mouse)).